We begin with the raw amino-acid sequence, 371 residues long: Aurora kinase (371 aa).

2 stretches are compositionally biased toward polar residues: residues 1–15 (MSMK…SVSL) and 48–80 (RIST…YTTD). Residues 1–84 (MSMKQLETSM…SSYTTDPPSP (84 aa)) are disordered. Residues 99 to 350 (FEIGKALGKG…LKDMHKHPWI (252 aa)) enclose the Protein kinase domain. ATP is bound by residues 105–113 (LGKGKFGKV) and K128. The Proton acceptor role is filled by D222.

The protein belongs to the protein kinase superfamily. Ser/Thr protein kinase family. Aurora subfamily.

It is found in the nucleus. Its subcellular location is the cytoplasm. The protein resides in the cytoskeleton. It localises to the spindle. The protein localises to the chromosome. It is found in the centromere. Its subcellular location is the kinetochore. It carries out the reaction L-seryl-[protein] + ATP = O-phospho-L-seryl-[protein] + ADP + H(+). The enzyme catalyses L-threonyl-[protein] + ATP = O-phospho-L-threonyl-[protein] + ADP + H(+). In terms of biological role, component of the chromosomal passenger complex (CPC), a complex that acts as a key regulator of chromosome segregation and cytokinesis. Has a role in error-correction of aberrent kinetochore-microtubule attachments to ensure that sister kinetochores become bioriented and connect to opposite poles by promoting spindle assembly checkpoint signaling. The polypeptide is Aurora kinase (IPL1) (Yarrowia lipolytica (strain CLIB 122 / E 150) (Yeast)).